Reading from the N-terminus, the 91-residue chain is Potassium channel toxin MeuTXK-beta-2 (91 aa).

The first 19 residues, 1–19 (MQRNLVVLLFLGMVALSSC), serve as a signal peptide directing secretion. Residues 54–91 (QFGCSAYQGYCDDHCQDIEKKEGFCHGFKCKCGIPMGF) enclose the BetaSPN-type CS-alpha/beta domain. 3 disulfide bridges follow: Cys-57–Cys-78, Cys-64–Cys-83, and Cys-68–Cys-85.

It belongs to the long chain scorpion toxin family. Class 1 subfamily. In terms of tissue distribution, expressed by the venom gland.

The protein localises to the secreted. Functionally, has a low affinity binding to potassium channels of rat brain synaptosomes. Displays weak antibacterial activity against Stenotrophomonas sp. Strongly inhibits the development of the Plasmodium berghei ookinetes. Displays slight hemolytic effect on mouse erythrocytes. Induces cytolysis on Xenopus oocytes at high concentrations. Is not toxic towards mice and towards the insect Tenebrio molitor. This chain is Potassium channel toxin MeuTXK-beta-2, found in Mesobuthus eupeus (Lesser Asian scorpion).